A 1201-amino-acid chain; its full sequence is Coatomer subunit alpha (1201 aa).

WD repeat units lie at residues 9-39 (SKSTRAKGIAFHPSRPWVLVALFSSTIQLWD), 51-81 (DHEGPVRGLDFHPTQPIFVSAGDDYTIKVWS), 93-123 (GHLDYVRTVFFHRELPWIISASDDQTIRIWN), 135-165 (GHNHFVMCAQFHPTDDLIVSASLDETIRIWD), 207-237 (GHTRGVNWASFHPTLPLIVSGSDDRQVKLWR), and 251-281 (GHTNNVDSVIFHPHQNLIISVGEDKTLRVWD). Residues 842 to 862 (AVNTTQEQEEPLGEENFNDED) are disordered. Acidic residues predominate over residues 848–862 (EQEEPLGEENFNDED).

As to quaternary structure, oligomeric complex that consists of at least the alpha, beta, beta', gamma, delta, epsilon and zeta subunits. Interacts with the ESCRT-0 subunit VPS27. Interacts with KEI1 (via C-terminal region).

The protein resides in the cytoplasm. It localises to the golgi apparatus membrane. It is found in the cytoplasmic vesicle. The protein localises to the COPI-coated vesicle membrane. The coatomer is a cytosolic protein complex that binds to dilysine motifs and reversibly associates with Golgi non-clathrin-coated vesicles, which further mediate biosynthetic protein transport from the ER, via the Golgi up to the trans Golgi network. Coatomer complex is required for budding from Golgi membranes, and is essential for the retrograde Golgi-to-ER transport of dilysine-tagged proteins. The sequence is that of Coatomer subunit alpha (COP1) from Saccharomyces cerevisiae (strain ATCC 204508 / S288c) (Baker's yeast).